A 131-amino-acid chain; its full sequence is Large ribosomal subunit protein bL17 (131 aa).

The protein belongs to the bacterial ribosomal protein bL17 family. As to quaternary structure, part of the 50S ribosomal subunit. Contacts protein L32.

In Burkholderia multivorans (strain ATCC 17616 / 249), this protein is Large ribosomal subunit protein bL17.